A 631-amino-acid polypeptide reads, in one-letter code: 1,4-alpha-glucan branching enzyme GlgB (631 aa).

The Nucleophile role is filled by Asp-309. The Proton donor role is filled by Glu-362.

The protein belongs to the glycosyl hydrolase 13 family. GlgB subfamily. As to quaternary structure, monomer.

The enzyme catalyses Transfers a segment of a (1-&gt;4)-alpha-D-glucan chain to a primary hydroxy group in a similar glucan chain.. The protein operates within glycan biosynthesis; glycogen biosynthesis. Functionally, catalyzes the formation of the alpha-1,6-glucosidic linkages in glycogen by scission of a 1,4-alpha-linked oligosaccharide from growing alpha-1,4-glucan chains and the subsequent attachment of the oligosaccharide to the alpha-1,6 position. In Marinobacter nauticus (strain ATCC 700491 / DSM 11845 / VT8) (Marinobacter aquaeolei), this protein is 1,4-alpha-glucan branching enzyme GlgB.